Consider the following 131-residue polypeptide: MAANIIKELEREEAQRLLAARAIPEFEPGDTLRVNVRIKEGERERVQAYEGVCIARSGGGVHESFTVRKISFGEGVERLFPLLSPSIESIEVKRRGVVRRAKLYYLRDRRGKSARIAERSNVRKVEVADAE.

This sequence belongs to the bacterial ribosomal protein bL19 family.

In terms of biological role, this protein is located at the 30S-50S ribosomal subunit interface and may play a role in the structure and function of the aminoacyl-tRNA binding site. The chain is Large ribosomal subunit protein bL19 from Caulobacter sp. (strain K31).